A 62-amino-acid chain; its full sequence is Large ribosomal subunit protein uL30 (62 aa).

This sequence belongs to the universal ribosomal protein uL30 family. Part of the 50S ribosomal subunit.

In Geobacillus kaustophilus (strain HTA426), this protein is Large ribosomal subunit protein uL30.